Here is a 345-residue protein sequence, read N- to C-terminus: Ferrochelatase (345 aa).

The Fe cation site is built by His215 and Glu296.

It belongs to the ferrochelatase family.

It localises to the cytoplasm. It catalyses the reaction heme b + 2 H(+) = protoporphyrin IX + Fe(2+). The protein operates within porphyrin-containing compound metabolism; protoheme biosynthesis; protoheme from protoporphyrin-IX: step 1/1. Catalyzes the ferrous insertion into protoporphyrin IX. Essential for normal nodule development. This chain is Ferrochelatase, found in Bradyrhizobium diazoefficiens (strain JCM 10833 / BCRC 13528 / IAM 13628 / NBRC 14792 / USDA 110).